The chain runs to 110 residues: Large ribosomal subunit protein uL22 (110 aa).

The protein belongs to the universal ribosomal protein uL22 family. As to quaternary structure, part of the 50S ribosomal subunit.

Its function is as follows. This protein binds specifically to 23S rRNA; its binding is stimulated by other ribosomal proteins, e.g. L4, L17, and L20. It is important during the early stages of 50S assembly. It makes multiple contacts with different domains of the 23S rRNA in the assembled 50S subunit and ribosome. In terms of biological role, the globular domain of the protein is located near the polypeptide exit tunnel on the outside of the subunit, while an extended beta-hairpin is found that lines the wall of the exit tunnel in the center of the 70S ribosome. The chain is Large ribosomal subunit protein uL22 from Halorhodospira halophila (strain DSM 244 / SL1) (Ectothiorhodospira halophila (strain DSM 244 / SL1)).